The following is a 145-amino-acid chain: Large ribosomal subunit protein bL17 (145 aa).

The segment at 123-145 is disordered; sequence KRVDRKKKDPAKDKTEEKKLATA.

It belongs to the bacterial ribosomal protein bL17 family. Part of the 50S ribosomal subunit. Contacts protein L32.

This is Large ribosomal subunit protein bL17 from Pelagibacter ubique (strain HTCC1062).